The following is a 279-amino-acid chain: uncharacterized protein (279 aa).

Residues 2-90 enclose the GIY-YIG domain; sequence KIGYIYAIEN…IRDYGSLNTI (89 aa).

It belongs to the IIV-6 019R family.

This is an uncharacterized protein from Acheta domesticus (House cricket).